The primary structure comprises 257 residues: MSDLKKAAQKAIELMDLTTLNDDDTDQKVIELCHKAKTPAGNTAAICIYPRFIPIARKTLNEMGCESIRIATVTNFPHGNDDIAIAVLETRAAVAYGADEVDVVFPYRALMAGNETVGFELVKACKEACGEGVLLKVIIESGVLQDPALIRKASELCIDAGADFIKTSTGKVPVNATIEAAEIMMTVISEKNTKVGFKPAGGVRDAAAAGEFLGLAARLLGDEWATPRTFRFGASSLLINLLHTLELGEAAKGPQGY.

Aspartate 102 acts as the Proton donor/acceptor in catalysis. Residue lysine 166 is the Schiff-base intermediate with acetaldehyde of the active site. Lysine 198 acts as the Proton donor/acceptor in catalysis.

This sequence belongs to the DeoC/FbaB aldolase family. DeoC type 2 subfamily.

It localises to the cytoplasm. It carries out the reaction 2-deoxy-D-ribose 5-phosphate = D-glyceraldehyde 3-phosphate + acetaldehyde. The protein operates within carbohydrate degradation; 2-deoxy-D-ribose 1-phosphate degradation; D-glyceraldehyde 3-phosphate and acetaldehyde from 2-deoxy-alpha-D-ribose 1-phosphate: step 2/2. In terms of biological role, catalyzes a reversible aldol reaction between acetaldehyde and D-glyceraldehyde 3-phosphate to generate 2-deoxy-D-ribose 5-phosphate. The chain is Deoxyribose-phosphate aldolase from Shewanella sediminis (strain HAW-EB3).